A 349-amino-acid polypeptide reads, in one-letter code: Putative inosamine-phosphate amidinotransferase 2 (349 aa).

It belongs to the amidinotransferase family.

The enzyme catalyses 1-amino-1-deoxy-scyllo-inositol 4-phosphate + L-arginine = 1-guanidino-1-deoxy-scyllo-inositol 4-phosphate + L-ornithine. Its pathway is antibiotic biosynthesis; streptomycin biosynthesis. In terms of biological role, it is not obvious if strB2 participates in streptomycin biosynthesis as an inosamine-phosphate amidinotransferase. Attempt to measure its activity have failed and the nucleophilic cysteine which is the key residue for amidine transfer is not conserved but replaced by a glycine residue. This is Putative inosamine-phosphate amidinotransferase 2 (strB2) from Streptomyces griseus.